Here is a 438-residue protein sequence, read N- to C-terminus: RNA polymerase sigma factor SigA (438 aa).

Residues 1 to 11 (MKKSKSKKKAA) are compositionally biased toward basic residues. The interval 1–69 (MKKSKSKKKA…PLDLEGPLEA (69 aa)) is disordered. Basic and acidic residues predominate over residues 12–26 (KAQEVEVKEPVKEPE). Composition is skewed to acidic residues over residues 27–45 (PLPE…EPDP) and 52–69 (PELE…PLEA). Positions 93–128 (SDPVRQYLHEIGQVPLLTLEEEIDLARKVEEGMEAI) are sigma-70 factor domain-1. A sigma-70 factor domain-2 region spans residues 202–272 (LIEANLRLVV…NRAIADQART (71 aa)). An Interaction with polymerase core subunit RpoC motif is present at residues 226 to 229 (DLIQ). The segment at 281–359 (ETINKLSRTA…DENLPSPVEA (79 aa)) is sigma-70 factor domain-3. A sigma-70 factor domain-4 region spans residues 372 to 424 (ALSKLSEREAMVLKLRKGLIDGREHTLEEVGAYFGVTRERIRQIENKALRKLK). The H-T-H motif DNA-binding region spans 398-417 (LEEVGAYFGVTRERIRQIEN).

Belongs to the sigma-70 factor family. RpoD/SigA subfamily. In terms of assembly, interacts transiently with the RNA polymerase catalytic core formed by RpoA, RpoB, RpoC and RpoZ (2 alpha, 1 beta, 1 beta' and 1 omega subunit) to form the RNA polymerase holoenzyme that can initiate transcription.

The protein resides in the cytoplasm. In terms of biological role, sigma factors are initiation factors that promote the attachment of RNA polymerase to specific initiation sites and are then released. This sigma factor is the primary sigma factor during exponential growth. In Thermus aquaticus, this protein is RNA polymerase sigma factor SigA.